The following is a 188-amino-acid chain: Phosphoribosylglycinamide formyltransferase (188 aa).

A N(1)-(5-phospho-beta-D-ribosyl)glycinamide-binding site is contributed by 12 to 14; the sequence is GSN. (6R)-10-formyltetrahydrofolate contacts are provided by residues Lys66, 91–94, and Asn108; that span reads MRLI. The active-site Proton donor is the His110.

Belongs to the GART family.

It carries out the reaction N(1)-(5-phospho-beta-D-ribosyl)glycinamide + (6R)-10-formyltetrahydrofolate = N(2)-formyl-N(1)-(5-phospho-beta-D-ribosyl)glycinamide + (6S)-5,6,7,8-tetrahydrofolate + H(+). It participates in purine metabolism; IMP biosynthesis via de novo pathway; N(2)-formyl-N(1)-(5-phospho-D-ribosyl)glycinamide from N(1)-(5-phospho-D-ribosyl)glycinamide (10-formyl THF route): step 1/1. Functionally, catalyzes the transfer of a formyl group from 10-formyltetrahydrofolate to 5-phospho-ribosyl-glycinamide (GAR), producing 5-phospho-ribosyl-N-formylglycinamide (FGAR) and tetrahydrofolate. This Staphylococcus aureus (strain Mu50 / ATCC 700699) protein is Phosphoribosylglycinamide formyltransferase.